The primary structure comprises 336 residues: Protein-glutamate methylesterase/protein-glutamine glutaminase 2 (336 aa).

The region spanning 2 to 119 (KIAIVNDMPM…PNPKEAAAPL (118 aa)) is the Response regulatory domain. 4-aspartylphosphate is present on Asp-53. Residues 147 to 336 (PSRRDRLVAI…APRLIEVFTQ (190 aa)) enclose the CheB-type methylesterase domain. Active-site residues include Ser-159, His-186, and Asp-279.

The protein belongs to the CheB family. In terms of processing, phosphorylated by CheA. Phosphorylation of the N-terminal regulatory domain activates the methylesterase activity.

The protein resides in the cytoplasm. The catalysed reaction is [protein]-L-glutamate 5-O-methyl ester + H2O = L-glutamyl-[protein] + methanol + H(+). It catalyses the reaction L-glutaminyl-[protein] + H2O = L-glutamyl-[protein] + NH4(+). In terms of biological role, involved in chemotaxis. Part of a chemotaxis signal transduction system that modulates chemotaxis in response to various stimuli. Catalyzes the demethylation of specific methylglutamate residues introduced into the chemoreceptors (methyl-accepting chemotaxis proteins or MCP) by CheR. Also mediates the irreversible deamidation of specific glutamine residues to glutamic acid. This chain is Protein-glutamate methylesterase/protein-glutamine glutaminase 2, found in Pseudomonas syringae pv. syringae (strain B728a).